The following is a 143-amino-acid chain: Putative pre-16S rRNA nuclease (143 aa).

It belongs to the YqgF nuclease family.

It localises to the cytoplasm. Its function is as follows. Could be a nuclease involved in processing of the 5'-end of pre-16S rRNA. This Salinibacter ruber (strain DSM 13855 / M31) protein is Putative pre-16S rRNA nuclease.